Here is a 955-residue protein sequence, read N- to C-terminus: Leucine--tRNA ligase (955 aa).

A 'HIGH' region motif is present at residues 66–77 (PYPSGSGLHVGH). A 'KMSKS' region motif is present at residues 725–729 (KMGKS). Lys728 lines the ATP pocket.

Belongs to the class-I aminoacyl-tRNA synthetase family.

It localises to the cytoplasm. The catalysed reaction is tRNA(Leu) + L-leucine + ATP = L-leucyl-tRNA(Leu) + AMP + diphosphate. The protein is Leucine--tRNA ligase of Saccharopolyspora erythraea (strain ATCC 11635 / DSM 40517 / JCM 4748 / NBRC 13426 / NCIMB 8594 / NRRL 2338).